The following is a 346-amino-acid chain: Ferredoxin--NADP reductase (346 aa).

Residues glutamate 35, glutamine 43, tyrosine 48, valine 88, phenylalanine 122, aspartate 287, and threonine 327 each contribute to the FAD site.

Belongs to the ferredoxin--NADP reductase type 2 family. Homodimer. The cofactor is FAD.

The catalysed reaction is 2 reduced [2Fe-2S]-[ferredoxin] + NADP(+) + H(+) = 2 oxidized [2Fe-2S]-[ferredoxin] + NADPH. This chain is Ferredoxin--NADP reductase, found in Oenococcus oeni (strain ATCC BAA-331 / PSU-1).